The chain runs to 202 residues: Large ribosomal subunit protein bL25 (202 aa).

The interval 182 to 202 (EVEAEETEDDEAASEGEEAAE) is disordered. A compositionally biased stretch (acidic residues) spans 183 to 202 (VEAEETEDDEAASEGEEAAE).

This sequence belongs to the bacterial ribosomal protein bL25 family. CTC subfamily. Part of the 50S ribosomal subunit; part of the 5S rRNA/L5/L18/L25 subcomplex. Contacts the 5S rRNA. Binds to the 5S rRNA independently of L5 and L18.

Functionally, this is one of the proteins that binds to the 5S RNA in the ribosome where it forms part of the central protuberance. In Corynebacterium glutamicum (strain R), this protein is Large ribosomal subunit protein bL25.